We begin with the raw amino-acid sequence, 155 residues long: Archaemetzincin (155 aa).

His-109 serves as a coordination point for Zn(2+). Glu-110 acts as the Proton acceptor in catalysis. 6 residues coordinate Zn(2+): His-113, His-119, Cys-120, Cys-125, Cys-144, and Cys-147.

This sequence belongs to the peptidase M54 family. As to quaternary structure, monomer. Requires Zn(2+) as cofactor.

Functionally, probable zinc metalloprotease whose natural substrate is unknown. The polypeptide is Archaemetzincin (Pyrobaculum aerophilum (strain ATCC 51768 / DSM 7523 / JCM 9630 / CIP 104966 / NBRC 100827 / IM2)).